A 632-amino-acid chain; its full sequence is MSAILSADDLNDFISPGVACIKPIETLPAKPEDSSNPYEVTTEDKAAASQPPPPASISLTDCLACSGCVTSAEAVLVSLQSHSEVLTTLDTYRSLRAPWQTQNGTNGTNGTNGTTNGHSTNGTTTNGINGHSHEGKLFVASVSPQSRASIAAVFNVSEAEAGNMIAQLLSGPSGLKTGGHQGSDFTWVLDTNVVREACLVAAADEVANALSPETSNPSTKPGSEGAIDTTPKQPILTSACPGWICYAEKTHPYILPHLSRLKSPQALTGTLIKSVLSQQYNIPPSQIWHVAIMPCFDKKLEASRSELTSSAWLPNHDATQDPVRDVDCVITARELLHLASARGINFASLPRTPLSASERTPFPDPKLDAFLFPHTRRKNQDVVAGSSGGYLYHILQTYQAQNPGSSISVSRGRNADVVEYSLVRGSETIIRAARFYGFRNIQNLVRRLKPAKASRLPGGKTGVSRKPGAAAGGDVKDYAYVEVMACPGGCTNGGGQVKITEVEEVRAYEGVESTNGDTLAPKPGPKEQKEWLAKVDEAYFSGSDSEEEKVDQDGDQNMQDATTNGHTSEPDIVNGISRRKINDVVAHWSHLTGVDTQKLLYTSYRKVESDVGKKQSDMERVAGLAVTVGGGW.

Cysteine 20 provides a ligand contact to [4Fe-4S] cluster. The disordered stretch occupies residues leucine 27–proline 53. Cysteine 62, cysteine 65, and cysteine 68 together coordinate [4Fe-4S] cluster. Disordered stretches follow at residues tryptophan 99 to serine 119 and leucine 210 to proline 231. Residues threonine 101–serine 119 show a composition bias toward low complexity. Residues serine 211 to proline 221 show a composition bias toward polar residues. Residues cysteine 240, cysteine 295, cysteine 486, and cysteine 490 each coordinate [4Fe-4S] cluster. The disordered stretch occupies residues glycine 542 to valine 573. Acidic residues predominate over residues aspartate 544–glycine 554. A compositionally biased stretch (polar residues) spans aspartate 555–threonine 567.

It belongs to the NARF family.

Component of the cytosolic Fe/S protein assembly machinery. Required for maturation of extramitochondrial Fe/S proteins. May play a role in the transfer of pre-assembled Fe/S clusters to target apoproteins. The chain is Cytosolic Fe-S cluster assembly factor NAR1 (NAR1) from Phaeosphaeria nodorum (strain SN15 / ATCC MYA-4574 / FGSC 10173) (Glume blotch fungus).